The chain runs to 751 residues: Photosystem I P700 chlorophyll a apoprotein A1 (751 aa).

Transmembrane regions (helical) follow at residues 73 to 96 (VFSA…FHGA), 159 to 182 (LYIT…FHYH), 198 to 222 (LNHH…HVSL), 294 to 312 (VAHH…GHMY), 349 to 372 (WHAQ…QHMY), 388 to 414 (LSLF…IFMV), 436 to 458 (AIIS…LYIH), and 533 to 551 (FLVH…LILL). [4Fe-4S] cluster is bound by residues Cys-575 and Cys-584. Transmembrane regions (helical) follow at residues 591-612 (HVFL…HFSW) and 665-687 (LSAY…MFLF). Chlorophyll a' is bound at residue His-676. Chlorophyll a contacts are provided by Met-684 and Tyr-692. Trp-693 lines the phylloquinone pocket. The helical transmembrane segment at 725 to 745 (AVGVAHYLLGGIATTWSFFLA) threads the bilayer.

Belongs to the PsaA/PsaB family. The PsaA/B heterodimer binds the P700 chlorophyll special pair and subsequent electron acceptors. PSI consists of a core antenna complex that captures photons, and an electron transfer chain that converts photonic excitation into a charge separation. The eukaryotic PSI reaction center is composed of at least 11 subunits. Requires P700 is a chlorophyll a/chlorophyll a' dimer, A0 is one or more chlorophyll a, A1 is one or both phylloquinones and FX is a shared 4Fe-4S iron-sulfur center. as cofactor.

The protein localises to the plastid. It is found in the chloroplast thylakoid membrane. The catalysed reaction is reduced [plastocyanin] + hnu + oxidized [2Fe-2S]-[ferredoxin] = oxidized [plastocyanin] + reduced [2Fe-2S]-[ferredoxin]. Functionally, psaA and PsaB bind P700, the primary electron donor of photosystem I (PSI), as well as the electron acceptors A0, A1 and FX. PSI is a plastocyanin/cytochrome c6-ferredoxin oxidoreductase, converting photonic excitation into a charge separation, which transfers an electron from the donor P700 chlorophyll pair to the spectroscopically characterized acceptors A0, A1, FX, FA and FB in turn. Oxidized P700 is reduced on the lumenal side of the thylakoid membrane by plastocyanin or cytochrome c6. This Euglena gracilis protein is Photosystem I P700 chlorophyll a apoprotein A1.